The following is a 280-amino-acid chain: Hydroxyethylthiazole kinase (280 aa).

Position 50 (M50) interacts with substrate. Positions 125 and 178 each coordinate ATP. G205 lines the substrate pocket.

This sequence belongs to the Thz kinase family. Mg(2+) is required as a cofactor.

The enzyme catalyses 5-(2-hydroxyethyl)-4-methylthiazole + ATP = 4-methyl-5-(2-phosphooxyethyl)-thiazole + ADP + H(+). The protein operates within cofactor biosynthesis; thiamine diphosphate biosynthesis; 4-methyl-5-(2-phosphoethyl)-thiazole from 5-(2-hydroxyethyl)-4-methylthiazole: step 1/1. In terms of biological role, catalyzes the phosphorylation of the hydroxyl group of 4-methyl-5-beta-hydroxyethylthiazole (THZ). The sequence is that of Hydroxyethylthiazole kinase from Lacticaseibacillus casei (strain BL23) (Lactobacillus casei).